Consider the following 227-residue polypeptide: Cytochrome c oxidase subunit 2 (227 aa).

The Mitochondrial intermembrane segment spans residues 1-14 (MAYPFQLGLQDATS). Residues 15-45 (PIMEELLHFHDHTLMIVFLISSLVLYIISLM) traverse the membrane as a helical segment. Topologically, residues 46–59 (LTTKLTHTSTMDAQ) are mitochondrial matrix. The helical transmembrane segment at 60–87 (EVETVWTILPAIILILIALPSLRILYMM) threads the bilayer. Over 88-227 (DEINNPSLTV…YFETWSAVMV (140 aa)) the chain is Mitochondrial intermembrane. Residues H161, C196, E198, C200, H204, and M207 each contribute to the Cu cation site. Residue E198 participates in Mg(2+) binding. Y218 carries the post-translational modification Phosphotyrosine.

It belongs to the cytochrome c oxidase subunit 2 family. Component of the cytochrome c oxidase (complex IV, CIV), a multisubunit enzyme composed of 14 subunits. The complex is composed of a catalytic core of 3 subunits MT-CO1, MT-CO2 and MT-CO3, encoded in the mitochondrial DNA, and 11 supernumerary subunits COX4I, COX5A, COX5B, COX6A, COX6B, COX6C, COX7A, COX7B, COX7C, COX8 and NDUFA4, which are encoded in the nuclear genome. The complex exists as a monomer or a dimer and forms supercomplexes (SCs) in the inner mitochondrial membrane with NADH-ubiquinone oxidoreductase (complex I, CI) and ubiquinol-cytochrome c oxidoreductase (cytochrome b-c1 complex, complex III, CIII), resulting in different assemblies (supercomplex SCI(1)III(2)IV(1) and megacomplex MCI(2)III(2)IV(2)). Found in a complex with TMEM177, COA6, COX18, COX20, SCO1 and SCO2. Interacts with TMEM177 in a COX20-dependent manner. Interacts with COX20. Interacts with COX16. The cofactor is Cu cation.

The protein localises to the mitochondrion inner membrane. The catalysed reaction is 4 Fe(II)-[cytochrome c] + O2 + 8 H(+)(in) = 4 Fe(III)-[cytochrome c] + 2 H2O + 4 H(+)(out). Its function is as follows. Component of the cytochrome c oxidase, the last enzyme in the mitochondrial electron transport chain which drives oxidative phosphorylation. The respiratory chain contains 3 multisubunit complexes succinate dehydrogenase (complex II, CII), ubiquinol-cytochrome c oxidoreductase (cytochrome b-c1 complex, complex III, CIII) and cytochrome c oxidase (complex IV, CIV), that cooperate to transfer electrons derived from NADH and succinate to molecular oxygen, creating an electrochemical gradient over the inner membrane that drives transmembrane transport and the ATP synthase. Cytochrome c oxidase is the component of the respiratory chain that catalyzes the reduction of oxygen to water. Electrons originating from reduced cytochrome c in the intermembrane space (IMS) are transferred via the dinuclear copper A center (CU(A)) of subunit 2 and heme A of subunit 1 to the active site in subunit 1, a binuclear center (BNC) formed by heme A3 and copper B (CU(B)). The BNC reduces molecular oxygen to 2 water molecules using 4 electrons from cytochrome c in the IMS and 4 protons from the mitochondrial matrix. This is Cytochrome c oxidase subunit 2 (MT-CO2) from Lycalopex culpaeus (Culpeo fox).